Consider the following 130-residue polypeptide: Glycine cleavage system H protein (130 aa).

One can recognise a Lipoyl-binding domain in the interval I23 to E105. N6-lipoyllysine is present on K64.

Belongs to the GcvH family. In terms of assembly, the glycine cleavage system is composed of four proteins: P, T, L and H. (R)-lipoate is required as a cofactor.

Functionally, the glycine cleavage system catalyzes the degradation of glycine. The H protein shuttles the methylamine group of glycine from the P protein to the T protein. In Carboxydothermus hydrogenoformans (strain ATCC BAA-161 / DSM 6008 / Z-2901), this protein is Glycine cleavage system H protein.